The sequence spans 403 residues: F-box protein At1g60400 (403 aa).

Positions Ile13 to Glu59 constitute an F-box domain.

The sequence is that of F-box protein At1g60400 from Arabidopsis thaliana (Mouse-ear cress).